The following is a 486-amino-acid chain: N-succinylglutamate 5-semialdehyde dehydrogenase (486 aa).

221–226 (GSSATG) lines the NAD(+) pocket. Active-site residues include Glu244 and Cys278.

Belongs to the aldehyde dehydrogenase family. AstD subfamily.

It carries out the reaction N-succinyl-L-glutamate 5-semialdehyde + NAD(+) + H2O = N-succinyl-L-glutamate + NADH + 2 H(+). Its pathway is amino-acid degradation; L-arginine degradation via AST pathway; L-glutamate and succinate from L-arginine: step 4/5. Functionally, catalyzes the NAD-dependent reduction of succinylglutamate semialdehyde into succinylglutamate. In Chromobacterium violaceum (strain ATCC 12472 / DSM 30191 / JCM 1249 / CCUG 213 / NBRC 12614 / NCIMB 9131 / NCTC 9757 / MK), this protein is N-succinylglutamate 5-semialdehyde dehydrogenase.